Reading from the N-terminus, the 230-residue chain is Urease accessory protein UreE (230 aa).

2 stretches are compositionally biased toward basic and acidic residues: residues 182–193 and 204–230; these read HVHVDSPLDEPH and SHGDGHSHSHSHDHDHDHRHDDHDHKH. The disordered stretch occupies residues 182–230; it reads HVHVDSPLDEPHGSGLHVHAIHSHGDGHSHSHSHDHDHDHRHDDHDHKH.

This sequence belongs to the UreE family.

The protein resides in the cytoplasm. Functionally, involved in urease metallocenter assembly. Binds nickel. Probably functions as a nickel donor during metallocenter assembly. The polypeptide is Urease accessory protein UreE (Yersinia mollaretii).